Here is a 256-residue protein sequence, read N- to C-terminus: Acetoacetate decarboxylase 3 (256 aa).

The Schiff-base intermediate with acetoacetate role is filled by Lys110.

Belongs to the ADC family.

It catalyses the reaction acetoacetate + H(+) = acetone + CO2. In terms of biological role, catalyzes the conversion of acetoacetate to acetone and carbon dioxide. The polypeptide is Acetoacetate decarboxylase 3 (Mesorhizobium japonicum (strain LMG 29417 / CECT 9101 / MAFF 303099) (Mesorhizobium loti (strain MAFF 303099))).